Consider the following 371-residue polypeptide: 4-hydroxy-3-methylbut-2-en-1-yl diphosphate synthase (flavodoxin) (371 aa).

Positions 270, 273, 305, and 312 each coordinate [4Fe-4S] cluster.

It belongs to the IspG family. [4Fe-4S] cluster is required as a cofactor.

The enzyme catalyses (2E)-4-hydroxy-3-methylbut-2-enyl diphosphate + oxidized [flavodoxin] + H2O + 2 H(+) = 2-C-methyl-D-erythritol 2,4-cyclic diphosphate + reduced [flavodoxin]. Its pathway is isoprenoid biosynthesis; isopentenyl diphosphate biosynthesis via DXP pathway; isopentenyl diphosphate from 1-deoxy-D-xylulose 5-phosphate: step 5/6. Functionally, converts 2C-methyl-D-erythritol 2,4-cyclodiphosphate (ME-2,4cPP) into 1-hydroxy-2-methyl-2-(E)-butenyl 4-diphosphate. The sequence is that of 4-hydroxy-3-methylbut-2-en-1-yl diphosphate synthase (flavodoxin) from Shewanella woodyi (strain ATCC 51908 / MS32).